A 242-amino-acid polypeptide reads, in one-letter code: Ribonuclease PH (242 aa).

Residues Arg87 and 125-127 (GTR) contribute to the phosphate site.

It belongs to the RNase PH family. In terms of assembly, homohexameric ring arranged as a trimer of dimers.

The enzyme catalyses tRNA(n+1) + phosphate = tRNA(n) + a ribonucleoside 5'-diphosphate. In terms of biological role, phosphorolytic 3'-5' exoribonuclease that plays an important role in tRNA 3'-end maturation. Removes nucleotide residues following the 3'-CCA terminus of tRNAs; can also add nucleotides to the ends of RNA molecules by using nucleoside diphosphates as substrates, but this may not be physiologically important. Probably plays a role in initiation of 16S rRNA degradation (leading to ribosome degradation) during starvation. The chain is Ribonuclease PH from Thermosynechococcus vestitus (strain NIES-2133 / IAM M-273 / BP-1).